The following is a 167-amino-acid chain: Multifunctional Ser/Thr-tRNA deacylase ProXp-y (167 aa).

The protein resides in the cytoplasm. The catalysed reaction is L-seryl-tRNA(Lys) + H2O = tRNA(Lys) + L-serine. It catalyses the reaction L-threonyl-tRNA(Lys) + H2O = tRNA(Lys) + L-threonine. It carries out the reaction L-homoseryl-tRNA(Lys) + H2O = tRNA(Lys) + L-homoserine + H(+). The enzyme catalyses L-seryl-tRNA(Ala) + H2O = tRNA(Ala) + L-serine. The catalysed reaction is L-homoseryl-tRNA(Ser) + H2O = tRNA(Ser) + L-homoserine + H(+). It catalyses the reaction L-seryl-tRNA(Thr) + H2O = tRNA(Thr) + L-serine. It carries out the reaction L-threonyl-tRNA(Ile) + H2O = tRNA(Ile) + L-threonine. The enzyme catalyses L-threonyl-tRNA(Val) + H2O = tRNA(Val) + L-threonine. The catalysed reaction is L-threonyl-tRNA(Ser) + H2O = tRNA(Ser) + L-threonine. Its function is as follows. An aminoacyl-tRNA editing enzyme that deacylates Ser-tRNA and/or Thr-tRNA mischarged by lysyl-tRNA synthetase (LysRS), threonyl-tRNA synthetase (ThrRS), seryl-tRNA synthetase (SerRS), alanyl-tRNA synthetase (AlaRS), valyl-tRNA synthetase (ValRS) and isoleucyl-tRNA synthetase (IleRS) in vitro. Also deacylates mischarged Hse-tRNA(Lys) and Hse-tRNA(Ser), and cognate Ser-tRNA(Ser) and Thr-tRNA(Thr) in vitro. The presence of cognate ThrRS abolishes the Thr-tRNA(Thr) deacylase activity, hence this activity is not applicable physiologically. Not able to remove the amino acid moiety from cognate Val-tRNA(Val), Ile-tRNA(Ile), Lys-tRNA(Lys), Ala-tRNA(Ala) or Pro-tRNA(Pro), or from incorrectly charged Ala-tRNA(Pro), Cys-tRNA(Pro) or Leu-tRNA(Pro) in vitro. May be required in vivo to prevent mistranslation and to maintain growth when the error prone stress-inducible lysyl-tRNA synthetase (LysU) is expressed under environmental pressure. This Escherichia coli O157:H7 protein is Multifunctional Ser/Thr-tRNA deacylase ProXp-y.